The sequence spans 146 residues: Acidic phospholipase A2 CM-II (146 aa).

An N-terminal signal peptide occupies residues 1–21; sequence MNPAHLLILAAVCVSPLGAFS. Residues 22–27 constitute a propeptide that is removed on maturation; sequence NRPMPL. 7 cysteine pairs are disulfide-bonded: Cys-38–Cys-98, Cys-53–Cys-145, Cys-55–Cys-71, Cys-70–Cys-126, Cys-77–Cys-119, Cys-87–Cys-112, and Cys-105–Cys-117. 3 residues coordinate Ca(2+): Tyr-54, Gly-56, and Gly-58. Residue His-74 is part of the active site. Asp-75 is a binding site for Ca(2+). Asp-120 is a catalytic residue.

This sequence belongs to the phospholipase A2 family. Group I subfamily. D49 sub-subfamily. Ca(2+) serves as cofactor. In terms of tissue distribution, expressed by the venom gland.

It localises to the secreted. It carries out the reaction a 1,2-diacyl-sn-glycero-3-phosphocholine + H2O = a 1-acyl-sn-glycero-3-phosphocholine + a fatty acid + H(+). In terms of biological role, PLA2 catalyzes the calcium-dependent hydrolysis of the 2-acyl groups in 3-sn-phosphoglycerides. Is able to suppress the acetylcholine (ACh)-evoked current mediated by alpha-7 (CHRNA7)-similar nAChRs in L.stagnalis neurons (IC(50)=37 nM) and to compete with alpha-bungarotoxin for binding to muscle- and alpha-7 neuronal nAChR types, as well as to AChBPs. In inhibition of alpha-bungarotoxin binding, this toxin is similarly active against T.californica nAChR (IC(50)=1.2 uM), human alpha-7 nAChR (IC(50)=3.2 uM), and L.stagnalis AChBP (IC(50)=1.0 uM), whereas it is not active against A.californica AChBP (IC(50)&gt;100 uM). In Naja kaouthia (Monocled cobra), this protein is Acidic phospholipase A2 CM-II.